The sequence spans 370 residues: Putative agmatine deiminase (370 aa).

Cysteine 361 acts as the Amidino-cysteine intermediate in catalysis.

Belongs to the agmatine deiminase family.

The catalysed reaction is agmatine + H2O = N-carbamoylputrescine + NH4(+). The chain is Putative agmatine deiminase from Shewanella putrefaciens (strain CN-32 / ATCC BAA-453).